The primary structure comprises 141 residues: DUF35 domain-containing scaffold protein (141 aa).

Zn(2+) is bound by residues Cys-30, Cys-33, Cys-44, and Cys-47.

Belongs to the scaffold protein DUF35 family. Interacts with acetoacetyl-CoA thiolase and HMG-CoA synthase (HMGCS) that catalyzes the first and second step in the mevalonate pathway, respectively.

In terms of biological role, functions as a scaffold to connect the acetoacetyl-CoA thiolase and HMG-CoA synthase (HMGCS) dimers in the channeling thiolase/HMGCS complex, which allows for efficient coupling of the endergonic thiolase reaction with the exergonic HMGCS reaction. The polypeptide is DUF35 domain-containing scaffold protein (Methanocaldococcus jannaschii (strain ATCC 43067 / DSM 2661 / JAL-1 / JCM 10045 / NBRC 100440) (Methanococcus jannaschii)).